Here is a 65-residue protein sequence, read N- to C-terminus: Oxiana weak toxin (65 aa).

5 disulfide bridges follow: Cys-3-Cys-24, Cys-6-Cys-11, Cys-17-Cys-42, Cys-46-Cys-57, and Cys-58-Cys-63.

The protein belongs to the three-finger toxin family. Ancestral subfamily. Orphan group II sub-subfamily. As to expression, expressed by the venom gland.

Its subcellular location is the secreted. Binds to muscle and neuronal nicotinic acetylcholine receptors (nAChR). It binds to extracellular domain of rat alpha-7/CHRNA7 nAChR (IC(50)=2.2 uM) and to Torpedo californica membranes (IC(50)=30 uM). This Naja oxiana (Central Asian cobra) protein is Oxiana weak toxin.